Here is a 32-residue protein sequence, read N- to C-terminus: Coenzyme PQQ synthesis protein A (32 aa).

A cross-link (pyrroloquinoline quinone (Glu-Tyr)) is located at residues 16-20 (EINMY).

The protein belongs to the PqqA family.

It participates in cofactor biosynthesis; pyrroloquinoline quinone biosynthesis. Required for coenzyme pyrroloquinoline quinone (PQQ) biosynthesis. PQQ is probably formed by cross-linking a specific glutamate to a specific tyrosine residue and excising these residues from the peptide. This Dinoroseobacter shibae (strain DSM 16493 / NCIMB 14021 / DFL 12) protein is Coenzyme PQQ synthesis protein A.